We begin with the raw amino-acid sequence, 205 residues long: Holliday junction branch migration complex subunit RuvA (205 aa).

Positions 1-64 are domain I; that stretch reads MIAHLRGELV…EDALTLYGFL (64 aa). A domain II region spans residues 65–143; the sequence is TQAEYDLFEL…AVPAGGGGVP (79 aa). Residues 144–153 are flexible linker; it reads DGLPVAVAPA. Residues 153 to 205 are domain III; it reads AGDAWAEASEALIALGYSRGEAAAALARVRAEAGEAPSVETLVRLALKQLYRG.

The protein belongs to the RuvA family. As to quaternary structure, homotetramer. Forms an RuvA(8)-RuvB(12)-Holliday junction (HJ) complex. HJ DNA is sandwiched between 2 RuvA tetramers; dsDNA enters through RuvA and exits via RuvB. An RuvB hexamer assembles on each DNA strand where it exits the tetramer. Each RuvB hexamer is contacted by two RuvA subunits (via domain III) on 2 adjacent RuvB subunits; this complex drives branch migration. In the full resolvosome a probable DNA-RuvA(4)-RuvB(12)-RuvC(2) complex forms which resolves the HJ.

The protein localises to the cytoplasm. Its function is as follows. The RuvA-RuvB-RuvC complex processes Holliday junction (HJ) DNA during genetic recombination and DNA repair, while the RuvA-RuvB complex plays an important role in the rescue of blocked DNA replication forks via replication fork reversal (RFR). RuvA specifically binds to HJ cruciform DNA, conferring on it an open structure. The RuvB hexamer acts as an ATP-dependent pump, pulling dsDNA into and through the RuvAB complex. HJ branch migration allows RuvC to scan DNA until it finds its consensus sequence, where it cleaves and resolves the cruciform DNA. The polypeptide is Holliday junction branch migration complex subunit RuvA (Symbiobacterium thermophilum (strain DSM 24528 / JCM 14929 / IAM 14863 / T)).